Reading from the N-terminus, the 337-residue chain is Protein XAP5 CIRCADIAN TIMEKEEPER (337 aa).

At S2 the chain carries N-acetylserine. Coiled-coil stretches lie at residues 13–41 (QDAV…KSAS) and 72–121 (TREE…GSSR). Positions 23–37 (KQREAERKKIQELKS) are enriched in basic and acidic residues. The tract at residues 23–47 (KQREAERKKIQELKSKSASGNDQSG) is disordered. Polar residues predominate over residues 38 to 47 (KSASGNDQSG). Residues 125-174 (AEDFENGSDEDDGENKSSGTGNLRCGKLGKDPSVETNFLPDSEREAEEQA) form a disordered region. Residues 126 to 137 (EDFENGSDEDDG) show a composition bias toward acidic residues. S132 bears the Phosphoserine mark. The span at 165-174 (DSEREAEEQA) shows a compositional bias: basic and acidic residues.

This sequence belongs to the FAM50 family. In terms of tissue distribution, expressed in leaves stems, flowers, roots, trichomes and hypocotyls.

It is found in the nucleus. Involved in light regulation of the circadian clock and photomorphogenesis. May play a global role in coordinating growth in response to the light environment. Acts as a light quality sensor directing both negative and positive transcriptional regulation. Inhibits growth in red light but promote growth in blue light. Inhibits clock gene expression in diurnal cycles. Plays no role in the control of flowering time. The polypeptide is Protein XAP5 CIRCADIAN TIMEKEEPER (XCT) (Arabidopsis thaliana (Mouse-ear cress)).